Consider the following 191-residue polypeptide: Cytochrome c oxidase assembly protein CtaG (191 aa).

The Cytoplasmic portion of the chain corresponds to 1–9; sequence MSLSPHQKT. A helical; Signal-anchor for type II membrane protein transmembrane segment spans residues 10-30; it reads AGGLVLVVAVMGAASFAAVPF. Over 31 to 191 the chain is Periplasmic; it reads YNWFCRVTGF…LAAESATDVN (161 aa).

The protein belongs to the COX11/CtaG family.

The protein localises to the cell inner membrane. Exerts its effect at some terminal stage of cytochrome c oxidase synthesis, probably by being involved in the insertion of the copper B into subunit I. This is Cytochrome c oxidase assembly protein CtaG from Cereibacter sphaeroides (strain ATCC 17023 / DSM 158 / JCM 6121 / CCUG 31486 / LMG 2827 / NBRC 12203 / NCIMB 8253 / ATH 2.4.1.) (Rhodobacter sphaeroides).